A 272-amino-acid polypeptide reads, in one-letter code: Acyl-[acyl-carrier-protein]--UDP-N-acetylglucosamine O-acyltransferase (272 aa).

It belongs to the transferase hexapeptide repeat family. LpxA subfamily. As to quaternary structure, homotrimer.

The protein resides in the cytoplasm. The enzyme catalyses a (3R)-hydroxyacyl-[ACP] + UDP-N-acetyl-alpha-D-glucosamine = a UDP-3-O-[(3R)-3-hydroxyacyl]-N-acetyl-alpha-D-glucosamine + holo-[ACP]. It participates in glycolipid biosynthesis; lipid IV(A) biosynthesis; lipid IV(A) from (3R)-3-hydroxytetradecanoyl-[acyl-carrier-protein] and UDP-N-acetyl-alpha-D-glucosamine: step 1/6. Functionally, involved in the biosynthesis of lipid A, a phosphorylated glycolipid that anchors the lipopolysaccharide to the outer membrane of the cell. This is Acyl-[acyl-carrier-protein]--UDP-N-acetylglucosamine O-acyltransferase from Methylobacterium radiotolerans (strain ATCC 27329 / DSM 1819 / JCM 2831 / NBRC 15690 / NCIMB 10815 / 0-1).